A 131-amino-acid chain; its full sequence is Antitoxin MqsA (131 aa).

Zn(2+)-binding residues include cysteine 3, cysteine 6, cysteine 37, and cysteine 40. The HTH cro/C1-type domain maps to 74–127 (IVKVRKKLSLTQKEASEIFGGGVNAFSRYEKGNAQPHPSTIKLLRVLDKHPELL). Positions 85–104 (QKEASEIFGGGVNAFSRYEK) form a DNA-binding region, H-T-H motif.

As to quaternary structure, homodimer. Crystallizes as a heterotetramer with MqsA, MqsR-MqsA(2)-MqsR. Purifies as a probable heterohexamer of 2 MqsR dimers and 1 MqsA dimer. Binds promoter DNA as a dimer. When the 2 dissociate the MsqR mRNA interferase becomes active. Zn(2+) is required as a cofactor. In terms of processing, degraded in the presence of oxidative stress, maybe by the Lon and/or ClpX proteases.

In terms of biological role, antitoxin component of a type II toxin-antitoxin (TA) system. Labile antitoxin that binds to the MqsR mRNA interferase toxin and neutralizes its endoribonuclease activity. Overexpression prevents MqsR-mediated cessation of cell growth and inhibition of cell proliferation. Initially reported to act as a cotranscription factor with MqsA. Following further experiments, the MqsR-MqsA complex does not bind DNA and all reported data are actually due to a small fraction of free MqsA alone binding DNA. Addition of MqsR to a preformed MqsA-promoter DNA complex causes dissociation of the MqsA-DNA complex, probably causing derepression of MqsA-repressed transcripts. MqsA binds to 2 palindromes in the promoter region of the mqsRA operon activating its transcription. Binds to other promoters, inducing mcbR and spy and repressing cspD among others. Binds to and represses the rpoS promoter, the master stress regulator, resulting in decreased cyclic-di-GMP, reduced stress resistance, increased cell motility and decreased biofilm formation; in these experiments 5 TA systems are missing (lacks MazEF, RelEB, ChpB, YoeB-YefM, YafQ-DinJ). An earlier study showed overexpression alone increases biofilm formation, perhaps by repressing cspD; in these experiments the 5 TA systems are present. Represses the csgD promoter. In the presence of stress, when this protein is degraded, the promoters it represses are derepressed, leading to biofilm formation. This TA system mediates cell growth during bile acid deoxycholate stress by degrading mRNA for probable deoxycholate-binding protein YgiS; bile acid detergents such as deoxycholate are important for host defense against bacterial growth in the gall bladder and duodenum. The polypeptide is Antitoxin MqsA (Escherichia coli (strain K12)).